Consider the following 540-residue polypeptide: GMP synthase [glutamine-hydrolyzing] (540 aa).

The Glutamine amidotransferase type-1 domain occupies 24-217; it reads KILIVDFGSQ…VRKVAGLTGD (194 aa). Cys101 (nucleophile) is an active-site residue. Active-site residues include His191 and Glu193. Positions 218 to 415 constitute a GMPS ATP-PPase domain; sequence WTMRAFREEA…LGLPEIFVGR (198 aa). 245 to 251 serves as a coordination point for ATP; the sequence is SGGVDSS.

In terms of assembly, homodimer.

It catalyses the reaction XMP + L-glutamine + ATP + H2O = GMP + L-glutamate + AMP + diphosphate + 2 H(+). Its pathway is purine metabolism; GMP biosynthesis; GMP from XMP (L-Gln route): step 1/1. In terms of biological role, catalyzes the synthesis of GMP from XMP. The chain is GMP synthase [glutamine-hydrolyzing] from Nitrobacter hamburgensis (strain DSM 10229 / NCIMB 13809 / X14).